The chain runs to 99 residues: Protein SPIRAL1-like 5 (99 aa).

Residues 1-12 show a composition bias toward gly residues; that stretch reads MSRGGSFGGGQS. Residues 1-99 are disordered; that stretch reads MSRGGSFGGG…SSLGYLFGDK (99 aa). Over residues 27-39 the composition is skewed to pro residues; that stretch reads TPAPPVAPKPAPP. The segment covering 56 to 73 has biased composition (polar residues); it reads KISNNNYQRVQGQNSGNF. The residue at position 58 (serine 58) is a Phosphoserine.

This sequence belongs to the SPIRAL1 family. As to expression, expressed exclusively in stems and flowers.

Acts redundantly with SPR1 in maintaining the cortical microtubules organization essential for anisotropic cell growth. The protein is Protein SPIRAL1-like 5 (SP1L5) of Arabidopsis thaliana (Mouse-ear cress).